Reading from the N-terminus, the 501-residue chain is ATP synthase subunit alpha (501 aa).

169–176 (GDRQTGKT) lines the ATP pocket.

Belongs to the ATPase alpha/beta chains family. F-type ATPases have 2 components, CF(1) - the catalytic core - and CF(0) - the membrane proton channel. CF(1) has five subunits: alpha(3), beta(3), gamma(1), delta(1), epsilon(1). CF(0) has three main subunits: a(1), b(2) and c(9-12). The alpha and beta chains form an alternating ring which encloses part of the gamma chain. CF(1) is attached to CF(0) by a central stalk formed by the gamma and epsilon chains, while a peripheral stalk is formed by the delta and b chains.

The protein localises to the cell membrane. The catalysed reaction is ATP + H2O + 4 H(+)(in) = ADP + phosphate + 5 H(+)(out). Functionally, produces ATP from ADP in the presence of a proton gradient across the membrane. The alpha chain is a regulatory subunit. This chain is ATP synthase subunit alpha, found in Streptococcus pneumoniae serotype 4 (strain ATCC BAA-334 / TIGR4).